The sequence spans 443 residues: UPF0597 protein Dvul_2496 (443 aa).

Residues 156–178 (GMERAPEADGTLHGGASCEPSAS) form a disordered region.

It belongs to the UPF0597 family.

The protein is UPF0597 protein Dvul_2496 of Nitratidesulfovibrio vulgaris (strain DP4) (Desulfovibrio vulgaris).